The sequence spans 394 residues: Ketoisovalerate oxidoreductase subunit VorA (394 aa).

As to quaternary structure, heterotetramer of one alpha, one beta, one delta and one gamma chain.

The enzyme catalyses 3-methyl-2-oxobutanoate + 2 oxidized [2Fe-2S]-[ferredoxin] + CoA = 2-methylpropanoyl-CoA + 2 reduced [2Fe-2S]-[ferredoxin] + CO2 + H(+). This chain is Ketoisovalerate oxidoreductase subunit VorA (vorA), found in Pyrococcus horikoshii (strain ATCC 700860 / DSM 12428 / JCM 9974 / NBRC 100139 / OT-3).